Here is a 413-residue protein sequence, read N- to C-terminus: uncharacterized protein (413 aa).

Helical transmembrane passes span 22–42, 270–290, 312–332, and 379–399; these read VLLV…TLIL, IIYV…ISIC, ILIQ…GNLI, and LIII…YPIY.

This sequence belongs to the ABC-4 integral membrane protein family. LolC/E subfamily.

It localises to the cell membrane. This is an uncharacterized protein from Buchnera aphidicola subsp. Schizaphis graminum (strain Sg).